Reading from the N-terminus, the 323-residue chain is tRNA N6-adenosine threonylcarbamoyltransferase (323 aa).

3 residues coordinate Fe cation: H105, H109, and Y126. Residues 126–130, D158, G171, E175, and N255 each bind substrate; that span reads YVSGG. Position 283 (D283) interacts with Fe cation.

It belongs to the KAE1 / TsaD family. Monomer. Component of the KEOPS complex that consists of Kae1, Bud32, Cgi121 and Pcc1; the whole complex dimerizes. Fe(2+) is required as a cofactor.

The protein localises to the cytoplasm. It carries out the reaction L-threonylcarbamoyladenylate + adenosine(37) in tRNA = N(6)-L-threonylcarbamoyladenosine(37) in tRNA + AMP + H(+). Required for the formation of a threonylcarbamoyl group on adenosine at position 37 (t(6)A37) in tRNAs that read codons beginning with adenine. Is a component of the KEOPS complex that is probably involved in the transfer of the threonylcarbamoyl moiety of threonylcarbamoyl-AMP (TC-AMP) to the N6 group of A37. Kae1 likely plays a direct catalytic role in this reaction, but requires other protein(s) of the complex to fulfill this activity. In Archaeoglobus fulgidus (strain ATCC 49558 / DSM 4304 / JCM 9628 / NBRC 100126 / VC-16), this protein is tRNA N6-adenosine threonylcarbamoyltransferase.